The following is a 530-amino-acid chain: Retinoic acid-induced protein 2 (530 aa).

Residues 1–13 (MDDLQSQNLSMDM) show a composition bias toward polar residues. Residues 1-22 (MDDLQSQNLSMDMTDSPPALAN) are disordered.

This is Retinoic acid-induced protein 2 (RAI2) from Homo sapiens (Human).